A 180-amino-acid chain; its full sequence is Acireductone dioxygenase (180 aa).

Residues His97, His99, Glu103, and His141 each contribute to the Fe(2+) site. Ni(2+) contacts are provided by His97, His99, Glu103, and His141.

Belongs to the acireductone dioxygenase (ARD) family. In terms of assembly, monomer. The cofactor is Fe(2+). Ni(2+) is required as a cofactor.

The enzyme catalyses 1,2-dihydroxy-5-(methylsulfanyl)pent-1-en-3-one + O2 = 3-(methylsulfanyl)propanoate + CO + formate + 2 H(+). It carries out the reaction 1,2-dihydroxy-5-(methylsulfanyl)pent-1-en-3-one + O2 = 4-methylsulfanyl-2-oxobutanoate + formate + 2 H(+). Its pathway is amino-acid biosynthesis; L-methionine biosynthesis via salvage pathway; L-methionine from S-methyl-5-thio-alpha-D-ribose 1-phosphate: step 5/6. In terms of biological role, catalyzes 2 different reactions between oxygen and the acireductone 1,2-dihydroxy-3-keto-5-methylthiopentene (DHK-MTPene) depending upon the metal bound in the active site. Fe-containing acireductone dioxygenase (Fe-ARD) produces formate and 2-keto-4-methylthiobutyrate (KMTB), the alpha-ketoacid precursor of methionine in the methionine recycle pathway. Ni-containing acireductone dioxygenase (Ni-ARD) produces methylthiopropionate, carbon monoxide and formate, and does not lie on the methionine recycle pathway. This chain is Acireductone dioxygenase, found in Klebsiella pneumoniae subsp. pneumoniae (strain ATCC 700721 / MGH 78578).